We begin with the raw amino-acid sequence, 169 residues long: NADH-quinone oxidoreductase subunit B (169 aa).

[4Fe-4S] cluster contacts are provided by cysteine 42, cysteine 43, cysteine 107, and cysteine 136.

The protein belongs to the complex I 20 kDa subunit family. As to quaternary structure, NDH-1 is composed of 14 different subunits. Subunits NuoB, C, D, E, F, and G constitute the peripheral sector of the complex. The cofactor is [4Fe-4S] cluster.

The protein localises to the cell inner membrane. It catalyses the reaction a quinone + NADH + 5 H(+)(in) = a quinol + NAD(+) + 4 H(+)(out). In terms of biological role, NDH-1 shuttles electrons from NADH, via FMN and iron-sulfur (Fe-S) centers, to quinones in the respiratory chain. Couples the redox reaction to proton translocation (for every two electrons transferred, four hydrogen ions are translocated across the cytoplasmic membrane), and thus conserves the redox energy in a proton gradient. This Campylobacter hominis (strain ATCC BAA-381 / DSM 21671 / CCUG 45161 / LMG 19568 / NCTC 13146 / CH001A) protein is NADH-quinone oxidoreductase subunit B.